A 288-amino-acid chain; its full sequence is Thymidylate synthase (288 aa).

Arginine 21 lines the dUMP pocket. Asparagine 51 contacts (6R)-5,10-methylene-5,6,7,8-tetrahydrofolate. 150 to 151 (RR) serves as a coordination point for dUMP. The active-site Nucleophile is the cysteine 170. DUMP-binding positions include 190-193 (RSGD), asparagine 201, and 231-233 (HIY). Aspartate 193 contributes to the (6R)-5,10-methylene-5,6,7,8-tetrahydrofolate binding site. A (6R)-5,10-methylene-5,6,7,8-tetrahydrofolate-binding site is contributed by alanine 287.

This sequence belongs to the thymidylate synthase family. Bacterial-type ThyA subfamily. Homodimer.

It localises to the cytoplasm. It carries out the reaction dUMP + (6R)-5,10-methylene-5,6,7,8-tetrahydrofolate = 7,8-dihydrofolate + dTMP. It functions in the pathway pyrimidine metabolism; dTTP biosynthesis. Functionally, catalyzes the reductive methylation of 2'-deoxyuridine-5'-monophosphate (dUMP) to 2'-deoxythymidine-5'-monophosphate (dTMP) while utilizing 5,10-methylenetetrahydrofolate (mTHF) as the methyl donor and reductant in the reaction, yielding dihydrofolate (DHF) as a by-product. This enzymatic reaction provides an intracellular de novo source of dTMP, an essential precursor for DNA biosynthesis. The polypeptide is Thymidylate synthase (Aster yellows witches'-broom phytoplasma (strain AYWB)).